The following is a 542-amino-acid chain: Probable cysteine proteinase 361L (542 aa).

Residues Cys172, His382, and Asn414 contribute to the active site. The helical transmembrane segment at 520–540 threads the bilayer; the sequence is TNNWYIYALIIIFILIIFFVL.

It belongs to the peptidase C1 family.

The protein localises to the membrane. In terms of biological role, probable cysteine protease. This is Probable cysteine proteinase 361L from Acheta domesticus (House cricket).